Here is a 324-residue protein sequence, read N- to C-terminus: Casein kinase I (324 aa).

In terms of domain architecture, Protein kinase spans 9–278 (YALGKKLGSG…LRRLLKDLFI (270 aa)). Residues 15-23 (LGSGSFGDI) and K38 each bind ATP. Catalysis depends on D128, which acts as the Proton acceptor.

Belongs to the protein kinase superfamily. CK1 Ser/Thr protein kinase family. Casein kinase I subfamily. As to quaternary structure, interacts with rhoptry protein RON3; the interaction is direct. Interacts with CK2alpha; the interaction is direct. Interacts with nucleosome assembly protein NAPL. Interacts with RAB5b. Interacts with host GAPVD1. Interacts with host SNX22. Requires Mg(2+) as cofactor.

Its subcellular location is the cytoplasm. The protein localises to the cytoplasmic vesicle. The protein resides in the secretory vesicle. It localises to the microneme. It is found in the secreted. Its subcellular location is the host cell surface. The catalysed reaction is L-seryl-[protein] + ATP = O-phospho-L-seryl-[protein] + ADP + H(+). It carries out the reaction L-threonyl-[protein] + ATP = O-phospho-L-threonyl-[protein] + ADP + H(+). Its function is as follows. Serine/threonine-protein kinase likely to be involved in many cellular processes. Phosphorylates rhoptry protein RON3, nucleosome assembly protein NAPL and DNA/RNA-binding protein ALBA4 in vitro. In Plasmodium falciparum (isolate Dd2), this protein is Casein kinase I.